Consider the following 320-residue polypeptide: uncharacterized protein (320 aa).

In terms of assembly, interacts with VP1054, VP39 and VP80.

The protein resides in the virion. It is found in the host nucleus. It localises to the host cytoplasm. Plays a role in nucleocapsid assembly and is essential for viral replication. Distributed over the cylindrical capsid sheath of nucleocapsid. This is an uncharacterized protein from Lepidoptera (butterflies and moths).